The following is a 501-amino-acid chain: Cytochrome P450 4d2 (501 aa).

2 residues coordinate heme: Glu311 and Cys449.

Belongs to the cytochrome P450 family. The cofactor is heme.

It localises to the endoplasmic reticulum membrane. The protein localises to the microsome membrane. Involved in the metabolism of insect hormones and in the breakdown of synthetic insecticides. The protein is Cytochrome P450 4d2 (Cyp4d2) of Drosophila melanogaster (Fruit fly).